Consider the following 482-residue polypeptide: Putative alpha-L-fucosidase (482 aa).

The first 16 residues, 1 to 16, serve as a signal peptide directing secretion; that stretch reads MIFLIFSILFLHLANC. N-linked (GlcNAc...) asparagine glycans are attached at residues Asn-182, Asn-343, Asn-359, and Asn-419.

Belongs to the glycosyl hydrolase 29 family.

It carries out the reaction an alpha-L-fucoside + H2O = L-fucose + an alcohol. Its function is as follows. Alpha-L-fucosidase is responsible for hydrolyzing the alpha-1,6-linked fucose joined to the reducing-end N-acetylglucosamine of the carbohydrate moieties of glycoproteins. This chain is Putative alpha-L-fucosidase, found in Caenorhabditis elegans.